We begin with the raw amino-acid sequence, 391 residues long: Arrestin-C (391 aa).

Residues 369-379 (ARQEPGGREES) are compositionally biased toward basic and acidic residues. Positions 369–391 (ARQEPGGREESQEALAAEGDEGS) are disordered.

Belongs to the arrestin family. As to quaternary structure, homodimer; disulfide-linked in response to retinal illumination. Interacts with CXCR4; the interaction is dependent on the C-terminal phosphorylation of CXCR4 and modulates the calcium ion mobilization activity of CXCR4. Interacts with GPR84.

The protein localises to the photoreceptor inner segment. It localises to the cell projection. The protein resides in the cilium. It is found in the photoreceptor outer segment. In terms of biological role, may play a role in an as yet undefined retina-specific signal transduction. Could bind to photoactivated-phosphorylated red/green opsins. The chain is Arrestin-C (ARR3) from Sus scrofa (Pig).